The primary structure comprises 85 residues: Large ribosomal subunit protein bL31B (85 aa).

It belongs to the bacterial ribosomal protein bL31 family. Type B subfamily. As to quaternary structure, part of the 50S ribosomal subunit.

This Vibrio cholerae serotype O1 (strain ATCC 39541 / Classical Ogawa 395 / O395) protein is Large ribosomal subunit protein bL31B.